A 513-amino-acid polypeptide reads, in one-letter code: Probable vesicular acetylcholine transporter-A (513 aa).

The Cytoplasmic portion of the chain corresponds to 1-39; it reads MATEESGGLAQTAAVKLSEMGERTKQLGNAIQDPERQRR. The helical transmembrane segment at 40 to 60 threads the bilayer; the sequence is IILVIVCVALLLDNMLYMVIV. The Lumenal, vesicle portion of the chain corresponds to 61–98; it reads PIVPDYLAHLESESEQAHVKGNSSINITQNENFDLQIG. N-linked (GlcNAc...) asparagine glycans are attached at residues Asn82 and Asn86. The helical transmembrane segment at 99–119 threads the bilayer; sequence VLFASKAILQLLVNPLTGTFI. The Cytoplasmic portion of the chain corresponds to 120 to 125; sequence DRVGYD. The helical transmembrane segment at 126-146 threads the bilayer; the sequence is IPLLIGLSIMFVSTCIFAFAE. The Lumenal, vesicle segment spans residues 147 to 156; that stretch reads NYATLFMARS. Residues 157–174 form a helical membrane-spanning segment; that stretch reads LQGLGSAFADTSGIAMIA. Over 175–186 the chain is Cytoplasmic; the sequence is DKYAEESERSRA. The chain crosses the membrane as a helical span at residues 187–207; that stretch reads LGIALAFISFGSLAAPPFGGV. At 208–215 the chain is on the lumenal, vesicle side; sequence LYEFAGKR. The chain crosses the membrane as a helical span at residues 216-236; it reads FPFIALACVCLADGILCLTVL. Residues 237-257 lie on the Cytoplasmic side of the membrane; that stretch reads KPFSSRTRENMPVGTPIYKLM. The chain crosses the membrane as a helical span at residues 258 to 278; it reads IDPYIAVVAGALTTCNIPLAF. The Lumenal, vesicle portion of the chain corresponds to 279-296; it reads LEPTIANWMEETMNASQW. Residue Asn292 is glycosylated (N-linked (GlcNAc...) asparagine). Residues 297-317 form a helical membrane-spanning segment; sequence QIGITWLPAFFPHILGVYLTV. The Cytoplasmic portion of the chain corresponds to 318–327; that stretch reads KLAAKYPHLQ. A helical transmembrane segment spans residues 328–348; that stretch reads WFYGALGMVIIGASSCIVPAC. Topologically, residues 349–353 are lumenal, vesicle; that stretch reads KNFEQ. A helical transmembrane segment spans residues 354–374; the sequence is LIIPLCGVCFGIALVDTALLP. At 375-390 the chain is on the cytoplasmic side; sequence TLAFLVDVRHVSVYGS. The helical transmembrane segment at 391 to 411 threads the bilayer; that stretch reads VYAIADISYCVAYALGPIVAG. The Lumenal, vesicle portion of the chain corresponds to 412–418; sequence KIVHDLG. The chain crosses the membrane as a helical span at residues 419 to 439; it reads FVQLNLGMGLANVLYAPALLL. Topologically, residues 440-513 are cytoplasmic; sequence LRNVSLMKPS…EEETSEPEYI (74 aa). The tract at residues 475 to 513 is disordered; the sequence is RKKHGYSSSGNCVPIDENGTFAGQSKSFSEEETSEPEYI. Acidic residues predominate over residues 504-513; the sequence is EEETSEPEYI.

The protein belongs to the major facilitator superfamily. Vesicular transporter family.

It is found in the membrane. Involved in acetylcholine transport into synaptic vesicles. This is Probable vesicular acetylcholine transporter-A from Danio rerio (Zebrafish).